A 109-amino-acid polypeptide reads, in one-letter code: Nucleoid-associated protein Sbal223_1770 (109 aa).

Belongs to the YbaB/EbfC family. Homodimer.

The protein resides in the cytoplasm. It is found in the nucleoid. In terms of biological role, binds to DNA and alters its conformation. May be involved in regulation of gene expression, nucleoid organization and DNA protection. The chain is Nucleoid-associated protein Sbal223_1770 from Shewanella baltica (strain OS223).